We begin with the raw amino-acid sequence, 128 residues long: Azurin (128 aa).

One can recognise a Plastocyanin-like domain in the interval 1-128 (AECKVDVDST…SMMKGAVVLK (128 aa)). Residues cysteine 3 and cysteine 26 are joined by a disulfide bond. Cu cation contacts are provided by histidine 46, cysteine 112, histidine 117, and methionine 121.

Its subcellular location is the periplasm. Functionally, transfers electrons from cytochrome c551 to cytochrome oxidase. This Pseudomonas chlororaphis (Pseudomonas aureofaciens) protein is Azurin.